The following is a 455-amino-acid chain: UDP-N-acetylmuramoylalanine--D-glutamate ligase (455 aa).

117-123 (GTNGKTT) contacts ATP.

It belongs to the MurCDEF family.

The protein localises to the cytoplasm. The catalysed reaction is UDP-N-acetyl-alpha-D-muramoyl-L-alanine + D-glutamate + ATP = UDP-N-acetyl-alpha-D-muramoyl-L-alanyl-D-glutamate + ADP + phosphate + H(+). It functions in the pathway cell wall biogenesis; peptidoglycan biosynthesis. Functionally, cell wall formation. Catalyzes the addition of glutamate to the nucleotide precursor UDP-N-acetylmuramoyl-L-alanine (UMA). This is UDP-N-acetylmuramoylalanine--D-glutamate ligase from Pelotomaculum thermopropionicum (strain DSM 13744 / JCM 10971 / SI).